Here is a 317-residue protein sequence, read N- to C-terminus: Beta-ketoacyl-[acyl-carrier-protein] synthase III (317 aa).

Active-site residues include Cys-112 and His-244. The ACP-binding stretch occupies residues 245 to 249; that stretch reads QANLR. Asn-274 is a catalytic residue.

It belongs to the thiolase-like superfamily. FabH family. As to quaternary structure, homodimer.

The protein resides in the cytoplasm. The catalysed reaction is malonyl-[ACP] + acetyl-CoA + H(+) = 3-oxobutanoyl-[ACP] + CO2 + CoA. It participates in lipid metabolism; fatty acid biosynthesis. Functionally, catalyzes the condensation reaction of fatty acid synthesis by the addition to an acyl acceptor of two carbons from malonyl-ACP. Catalyzes the first condensation reaction which initiates fatty acid synthesis and may therefore play a role in governing the total rate of fatty acid production. Possesses both acetoacetyl-ACP synthase and acetyl transacylase activities. Its substrate specificity determines the biosynthesis of branched-chain and/or straight-chain of fatty acids. This Enterobacter sp. (strain 638) protein is Beta-ketoacyl-[acyl-carrier-protein] synthase III.